The sequence spans 182 residues: Ribosome maturation factor RimM (182 aa).

The region spanning 101–174 (QDEYFIHQLY…QIVVRLLPGL (74 aa)) is the PRC barrel domain.

It belongs to the RimM family. In terms of assembly, binds ribosomal protein uS19.

Its subcellular location is the cytoplasm. Its function is as follows. An accessory protein needed during the final step in the assembly of 30S ribosomal subunit, possibly for assembly of the head region. Essential for efficient processing of 16S rRNA. May be needed both before and after RbfA during the maturation of 16S rRNA. It has affinity for free ribosomal 30S subunits but not for 70S ribosomes. This Roseiflexus sp. (strain RS-1) protein is Ribosome maturation factor RimM.